The following is an 867-amino-acid chain: DNA replication licensing factor mcm6 (867 aa).

Residues 51–76 (IDKNNNNNNNEDNEDNNENENEYDEN) are disordered. The segment covering 61-75 (EDNEDNNENENEYDE) has biased composition (acidic residues). One can recognise an MCM domain in the interval 420-626 (IYQNLVNSIC…ESDHRIAEHI (207 aa)). Positions 473, 474, 476, 477, and 578 each coordinate ATP. An Arginine finger motif is present at residues 602 to 605 (SRFD). 2 residues coordinate ADP: Arg693 and Glu696.

This sequence belongs to the MCM family. In terms of assembly, component of the MCM2-7 complex. The complex forms a toroidal hexameric ring with the proposed subunit order MCM2-MCM6-MCM4-MCM7-MCM3-MCM5 (By simililarity).

It is found in the nucleus. The enzyme catalyses ATP + H2O = ADP + phosphate + H(+). In terms of biological role, acts as a component of the MCM2-7 complex (MCM complex) which is the replicative helicase essential for 'once per cell cycle' DNA replication initiation and elongation in eukaryotic cells. Core component of CDC45-MCM-GINS (CMG) helicase, the molecular machine that unwinds template DNA during replication, and around which the replisome is built. The active ATPase sites in the MCM2-7 ring are formed through the interaction surfaces of two neighboring subunits such that a critical structure of a conserved arginine finger motif is provided in trans relative to the ATP-binding site of the Walker A box of the adjacent subunit. The six ATPase active sites, however, are likely to contribute differentially to the complex helicase activity. The sequence is that of DNA replication licensing factor mcm6 (mcm6) from Dictyostelium discoideum (Social amoeba).